A 577-amino-acid chain; its full sequence is PTS system lactose-specific EIICB component (577 aa).

A PTS EIIC type-3 domain is found at 4–405; sequence VFDKLKPVFE…VLDVAIYFPF (402 aa). Helical transmembrane passes span 27–47, 63–83, 100–120, 133–153, 176–196, 219–239, 280–300, 326–346, and 386–406; these read GFIACMPIIIFSSIFMMVAYV, LMVAYNYSMGLLALFVAGTTA, INPVAVIVASEISFVILSILP, QGLICAYIVGLIVPNIYYVCI, LIPMGLSVTAFWLFGVGFKAA, YLGLALIAGAMAFFWFCGVQG, VMNFGGTGATLVVPFIMLFAA, FGMPIIMNPMLFIPFLATPIV, and LAFVFVLLTLVLDVAIYFPFI. Residues 476–577 enclose the PTS EIIB type-3 domain; sequence EVDVLVLCAG…MALDFVESNL (102 aa). Cys483 acts as the Phosphocysteine intermediate; for EIIB activity in catalysis. Residue Cys483 is modified to Phosphocysteine; by EIIA.

It localises to the cell membrane. The catalysed reaction is lactose(out) + N(pros)-phospho-L-histidyl-[protein] = lactose 6-phosphate(in) + L-histidyl-[protein]. Functionally, the phosphoenolpyruvate-dependent sugar phosphotransferase system (sugar PTS), a major carbohydrate active transport system, catalyzes the phosphorylation of incoming sugar substrates concomitantly with their translocation across the cell membrane. The enzyme II LacEF PTS system is involved in lactose transport. The polypeptide is PTS system lactose-specific EIICB component (Lacticaseibacillus casei (Lactobacillus casei)).